The primary structure comprises 354 residues: GDSL esterase/lipase At5g03820 (354 aa).

An N-terminal signal peptide occupies residues 1-24 (MKMFIIMLMTFSVIACFYAGVGTG). Ser-37 (nucleophile) is an active-site residue. Asn-66, Asn-100, Asn-237, Asn-256, Asn-257, Asn-261, and Asn-321 each carry an N-linked (GlcNAc...) asparagine glycan. Active-site residues include Asp-329 and His-332.

Belongs to the 'GDSL' lipolytic enzyme family.

The protein localises to the secreted. The protein is GDSL esterase/lipase At5g03820 of Arabidopsis thaliana (Mouse-ear cress).